Here is a 393-residue protein sequence, read N- to C-terminus: S-adenosylmethionine synthase (393 aa).

Glutamate 9 provides a ligand contact to Mg(2+). Histidine 15 is an ATP binding site. Glutamate 43 serves as a coordination point for K(+). L-methionine contacts are provided by glutamate 56 and glutamine 99. ATP-binding positions include 167–169 (DGK), 235–238 (SGRF), aspartate 246, 252–253 (RK), alanine 269, lysine 273, and lysine 277. An L-methionine-binding site is contributed by aspartate 246. L-methionine is bound at residue lysine 277.

It belongs to the AdoMet synthase family. In terms of assembly, homotetramer. It depends on Mn(2+) as a cofactor. Requires Mg(2+) as cofactor. The cofactor is Co(2+). K(+) is required as a cofactor.

The protein localises to the cytoplasm. It catalyses the reaction L-methionine + ATP + H2O = S-adenosyl-L-methionine + phosphate + diphosphate. It participates in amino-acid biosynthesis; S-adenosyl-L-methionine biosynthesis; S-adenosyl-L-methionine from L-methionine: step 1/1. Its function is as follows. Catalyzes the formation of S-adenosylmethionine from methionine and ATP. The reaction comprises two steps that are both catalyzed by the same enzyme: formation of S-adenosylmethionine (AdoMet) and triphosphate, and subsequent hydrolysis of the triphosphate. In Litchi chinensis (Lychee), this protein is S-adenosylmethionine synthase (SAMS).